Consider the following 345-residue polypeptide: Phosphoribosylformylglycinamidine cyclo-ligase (345 aa).

This sequence belongs to the AIR synthase family.

Its subcellular location is the cytoplasm. It carries out the reaction 2-formamido-N(1)-(5-O-phospho-beta-D-ribosyl)acetamidine + ATP = 5-amino-1-(5-phospho-beta-D-ribosyl)imidazole + ADP + phosphate + H(+). It functions in the pathway purine metabolism; IMP biosynthesis via de novo pathway; 5-amino-1-(5-phospho-D-ribosyl)imidazole from N(2)-formyl-N(1)-(5-phospho-D-ribosyl)glycinamide: step 2/2. This Methanopyrus kandleri (strain AV19 / DSM 6324 / JCM 9639 / NBRC 100938) protein is Phosphoribosylformylglycinamidine cyclo-ligase.